A 150-amino-acid chain; its full sequence is SsrA-binding protein (150 aa).

This sequence belongs to the SmpB family.

The protein resides in the cytoplasm. Its function is as follows. Required for rescue of stalled ribosomes mediated by trans-translation. Binds to transfer-messenger RNA (tmRNA), required for stable association of tmRNA with ribosomes. tmRNA and SmpB together mimic tRNA shape, replacing the anticodon stem-loop with SmpB. tmRNA is encoded by the ssrA gene; the 2 termini fold to resemble tRNA(Ala) and it encodes a 'tag peptide', a short internal open reading frame. During trans-translation Ala-aminoacylated tmRNA acts like a tRNA, entering the A-site of stalled ribosomes, displacing the stalled mRNA. The ribosome then switches to translate the ORF on the tmRNA; the nascent peptide is terminated with the 'tag peptide' encoded by the tmRNA and targeted for degradation. The ribosome is freed to recommence translation, which seems to be the essential function of trans-translation. The sequence is that of SsrA-binding protein from Borreliella afzelii (strain PKo) (Borrelia afzelii).